A 169-amino-acid chain; its full sequence is Cytochrome c-type biogenesis protein CcmE (169 aa).

Residues 1–7 (MTRKSRR) lie on the Cytoplasmic side of the membrane. A helical; Signal-anchor for type II membrane protein transmembrane segment spans residues 8–28 (LILIAACGAVLALALGLILSA). The Periplasmic segment spans residues 29–169 (MSGSIVFFRS…DATLGQRSER (141 aa)). H122 and Y126 together coordinate heme. Positions 135 to 169 (LKAQGRWQEGGGKEAPKDAAKPASADATLGQRSER) are disordered. Residues 145 to 154 (GGKEAPKDAA) are compositionally biased toward basic and acidic residues.

It belongs to the CcmE/CycJ family.

The protein localises to the cell inner membrane. Functionally, heme chaperone required for the biogenesis of c-type cytochromes. Transiently binds heme delivered by CcmC and transfers the heme to apo-cytochromes in a process facilitated by CcmF and CcmH. This is Cytochrome c-type biogenesis protein CcmE from Methylorubrum populi (strain ATCC BAA-705 / NCIMB 13946 / BJ001) (Methylobacterium populi).